The chain runs to 248 residues: Trihelix transcription factor ENAP2 (248 aa).

Residues 1 to 13 are compositionally biased toward polar residues; that stretch reads METTTPQSKSSVS. A disordered region spans residues 1–20; that stretch reads METTTPQSKSSVSHRPPLGR. A DNA-binding region (MADF) is located at residues 24-113; sequence WSEEATATLV…RLDVLIGPVV (90 aa). Positions 69–76 match the Nuclear localization signal motif; that stretch reads RKKTDLQC. A disordered region spans residues 123 to 150; the sequence is SAPFKNHLNPTGSNSTGSSLEDDDEDDD. Positions 130–141 are enriched in polar residues; it reads LNPTGSNSTGSS. Residues 190–210 are a coiled coil; it reads YERIEGKKQQMMIELEKQRME.

As to quaternary structure, interacts with the Agrobacterium tumefaciens virulence protein F (VirF) in the nucleus. Binds to EIN2 C-terminal region in the presence of ethylene.

The protein localises to the nucleus. It is found in the nucleoplasm. Probable transcription regulator. Promotes histone acetylation during ethylene signaling in an EIN2-dependent manner, thus regulating positively ethylene-responsive genes. This is Trihelix transcription factor ENAP2 from Arabidopsis thaliana (Mouse-ear cress).